Reading from the N-terminus, the 238-residue chain is Ribonuclease PH (238 aa).

Phosphate is bound by residues arginine 86 and 124–126 (GTR).

The protein belongs to the RNase PH family. As to quaternary structure, homohexameric ring arranged as a trimer of dimers.

It catalyses the reaction tRNA(n+1) + phosphate = tRNA(n) + a ribonucleoside 5'-diphosphate. In terms of biological role, phosphorolytic 3'-5' exoribonuclease that plays an important role in tRNA 3'-end maturation. Removes nucleotide residues following the 3'-CCA terminus of tRNAs; can also add nucleotides to the ends of RNA molecules by using nucleoside diphosphates as substrates, but this may not be physiologically important. Probably plays a role in initiation of 16S rRNA degradation (leading to ribosome degradation) during starvation. In Brucella melitensis biotype 2 (strain ATCC 23457), this protein is Ribonuclease PH.